A 92-amino-acid polypeptide reads, in one-letter code: Large ribosomal subunit protein eL43z (92 aa).

The segment at 39 to 60 (CEFCGKYSVKRKVVGIWGCKDC) adopts a C4-type zinc-finger fold.

The protein belongs to the eukaryotic ribosomal protein eL43 family.

The sequence is that of Large ribosomal subunit protein eL43z (RPL37AB) from Arabidopsis thaliana (Mouse-ear cress).